The chain runs to 305 residues: D-alanine--D-alanine ligase (305 aa).

The ATP-grasp domain maps to 107–299 (KKMLCYHGIA…FDELVERILA (193 aa)). An ATP-binding site is contributed by 134–186 (PDYPLVVKPAREGSTIGISIVHDEQELAAGLEEAFRHDDLVLVEQFIAGAEVT). Mg(2+) is bound by residues D254, E266, and N268.

Belongs to the D-alanine--D-alanine ligase family. Requires Mg(2+) as cofactor. It depends on Mn(2+) as a cofactor.

The protein resides in the cytoplasm. It carries out the reaction 2 D-alanine + ATP = D-alanyl-D-alanine + ADP + phosphate + H(+). It participates in cell wall biogenesis; peptidoglycan biosynthesis. Cell wall formation. This is D-alanine--D-alanine ligase from Syntrophotalea carbinolica (strain DSM 2380 / NBRC 103641 / GraBd1) (Pelobacter carbinolicus).